A 233-amino-acid chain; its full sequence is UPF0502 protein YPTS_2082 (233 aa).

Belongs to the UPF0502 family.

The chain is UPF0502 protein YPTS_2082 from Yersinia pseudotuberculosis serotype IB (strain PB1/+).